Here is a 313-residue protein sequence, read N- to C-terminus: MKKKLIIGTRSSPLALWQADFTQAELSKHFPDLEIELKLVKTTGDVLLDSPLSKIGDMGLFTKDIEKHLISGEIDLAVHSLKDVPTETPEGLMLSAFTEREDTRDVIISKNGESLKTLKQDAKIATSSLRRTSQLLSMRPDFQMGDIRGNLNTRFKKFDESDFDAMMLAYAGVHRLNFGDRISEILPHEVMLPAVGQGALGIETRVDDEATKEIVSVMNNVNTEFCTKAERALLRHLQGGCQIPIGSYASLKNGNLHLLAYVGSVDGKRTIRNEITKENCTLPEQAEQAGIELAEELLKQGANEILAEIRKTC.

Cys-241 is subject to S-(dipyrrolylmethanemethyl)cysteine.

This sequence belongs to the HMBS family. Monomer. Dipyrromethane is required as a cofactor.

The catalysed reaction is 4 porphobilinogen + H2O = hydroxymethylbilane + 4 NH4(+). It participates in porphyrin-containing compound metabolism; protoporphyrin-IX biosynthesis; coproporphyrinogen-III from 5-aminolevulinate: step 2/4. It functions in the pathway porphyrin-containing compound metabolism; chlorophyll biosynthesis. In terms of biological role, tetrapolymerization of the monopyrrole PBG into the hydroxymethylbilane pre-uroporphyrinogen in several discrete steps. The protein is Porphobilinogen deaminase of Chlorobium phaeobacteroides (strain BS1).